The following is a 203-amino-acid chain: Small ribosomal subunit protein uS4 (203 aa).

Positions 93-156 constitute an S4 RNA-binding domain; sequence QRLDNVVYRL…MKVPAILEAV (64 aa).

This sequence belongs to the universal ribosomal protein uS4 family. As to quaternary structure, part of the 30S ribosomal subunit. Contacts protein S5. The interaction surface between S4 and S5 is involved in control of translational fidelity.

In terms of biological role, one of the primary rRNA binding proteins, it binds directly to 16S rRNA where it nucleates assembly of the body of the 30S subunit. With S5 and S12 plays an important role in translational accuracy. In Lactococcus lactis subsp. cremoris (strain MG1363), this protein is Small ribosomal subunit protein uS4.